Consider the following 446-residue polypeptide: Glutamine synthetase (446 aa).

The GS beta-grasp domain occupies 15–103; sequence ENVKFLRLQI…LICDVYYPDG (89 aa). The GS catalytic domain maps to 110–446; that stretch reads PRYVLKRQIE…WELDRYLATY (337 aa). Mg(2+) contacts are provided by Glu-134 and Glu-136. Glu-186 lines the ATP pocket. Glu-191 and Glu-198 together coordinate Mg(2+). L-glutamate is bound by residues 242-243 and Gly-243; that span reads NG. His-247 is a Mg(2+) binding site. Residue Ser-251 participates in ATP binding. Positions 300, 306, and 318 each coordinate L-glutamate. Positions 318 and 323 each coordinate ATP. Glu-335 serves as a coordination point for Mg(2+). Arg-337 is an L-glutamate binding site.

It belongs to the glutamine synthetase family. Interacts with GCBP (TTHA1554). It depends on Mg(2+) as a cofactor.

It localises to the cytoplasm. The enzyme catalyses L-glutamate + NH4(+) + ATP = L-glutamine + ADP + phosphate + H(+). Activity increases by approximately two-fold in the presence of GCBP. Functionally, catalyzes the ATP-dependent biosynthesis of glutamine from glutamate and ammonia. The chain is Glutamine synthetase from Thermus thermophilus (strain ATCC 27634 / DSM 579 / HB8).